The sequence spans 723 residues: Cyclin-T2 (723 aa).

The tract at residues 1–298 (MASGRGASSR…SVTGVPANPS (298 aa)) is interaction with MDFIC and MDFI. A Cyclin N-terminal domain is found at 12 to 147 (FFTREQLENT…IMLQTLGFEI (136 aa)). The segment at 250-298 (RLKRIRNWRAMAKKPKVDGQVSETPLLGSSLVQNSILVDSVTGVPANPS) is interaction with POLR2A. Composition is skewed to polar residues over residues 297-307 (PSFQKPSTSTF) and 314-325 (NSGSTSVQDSRA). Disordered regions lie at residues 297 to 325 (PSFQ…DSRA), 340 to 364 (SYSL…VYTQ), 385 to 428 (ALHS…GMLP), and 458 to 645 (AEQQ…SSVK). Over residues 395–409 (DKVADHSSAKQEYTH) the composition is skewed to basic and acidic residues. Lysine 404 participates in a covalent cross-link: Glycyl lysine isopeptide (Lys-Gly) (interchain with G-Cter in SUMO2). Serine 477 carries the post-translational modification Phosphoserine. 3 stretches are compositionally biased toward basic and acidic residues: residues 489–503 (DRPE…ERSG), 517–543 (GPSK…EGSG), and 552–565 (ISRD…EHPA). The span at 566 to 576 (NRHHSSHKYLH) shows a compositional bias: basic residues. Position 596 is a phosphoserine (serine 596). Residues 631-645 (SSKSAGSSSSSSSVK) show a composition bias toward low complexity.

This sequence belongs to the cyclin family. Cyclin C subfamily. Interacts with CDK9 to form P-TEFb. Interacts with POLR2A (via the C-terminal domain (CTD)); mediates transcriptional activity. Interacts with HEXIM1; mediates formation of a tripartite complex with KPNA2. Interacts with HEXIM2. Interacts with PKN1; enhances MYOD1-dependent transcription. P-TEFB complex interacts with RB1; promotes phosphorylation of RB1. P-TEFB complex interacts with MYOD1; promotes the transcriptional activity of MYOD1 through its CDK9-mediated phosphorylation. Interacts with MDFI and MDFIC. Highly expressed in all phases of skeletal muscle differentiation, particularly in later stages. Highly expressed in skeletal muscle. Significantly expressed in heart, brain, kidney, liver, testis, and pancreas.

The protein resides in the cytoplasm. Its subcellular location is the perinuclear region. It localises to the nucleus. Functionally, regulatory subunit of the cyclin-dependent kinase pair (CDK9/cyclin T) complex, also called positive transcription elongation factor B (P-TEFB), which is proposed to facilitate the transition from abortive to production elongation by phosphorylating the CTD (carboxy-terminal domain) of the large subunit of RNA polymerase II (RNAP II). The activity of this complex is regulated by binding with 7SK snRNA. Plays a role during muscle differentiation; P-TEFB complex interacts with MYOD1; this tripartite complex promotes the transcriptional activity of MYOD1 through its CDK9-mediated phosphorylation and binds the chromatin of promoters and enhancers of muscle-specific genes; this event correlates with hyperphosphorylation of the CTD domain of RNA pol II. In addition, enhances MYOD1-dependent transcription through interaction with PKN1. Involved in early embryo development. The polypeptide is Cyclin-T2 (Mus musculus (Mouse)).